A 319-amino-acid chain; its full sequence is ATP-dependent 6-phosphofructokinase (319 aa).

Residue G11 coordinates ATP. An ADP-binding site is contributed by 21–25 (RAVVR). Residues 72–73 (RC) and 102–105 (GNGS) contribute to the ATP site. N103 is a binding site for Mg(2+). 125–127 (TID) is a substrate binding site. D127 functions as the Proton acceptor in the catalytic mechanism. R154 is an ADP binding site. Residues R162 and 169–171 (MGR) contribute to the substrate site. ADP is bound by residues 185–187 (GAE), R211, and 213–215 (KMH). Residues E222, R243, and 249–252 (HIQR) contribute to the substrate site.

Belongs to the phosphofructokinase type A (PFKA) family. ATP-dependent PFK group I subfamily. Prokaryotic clade 'B1' sub-subfamily. As to quaternary structure, homotetramer. Mg(2+) serves as cofactor.

The protein localises to the cytoplasm. It carries out the reaction beta-D-fructose 6-phosphate + ATP = beta-D-fructose 1,6-bisphosphate + ADP + H(+). Its pathway is carbohydrate degradation; glycolysis; D-glyceraldehyde 3-phosphate and glycerone phosphate from D-glucose: step 3/4. Allosterically activated by ADP and other diphosphonucleosides, and allosterically inhibited by phosphoenolpyruvate. In terms of biological role, catalyzes the phosphorylation of D-fructose 6-phosphate to fructose 1,6-bisphosphate by ATP, the first committing step of glycolysis. The polypeptide is ATP-dependent 6-phosphofructokinase (Clostridium acetobutylicum (strain ATCC 824 / DSM 792 / JCM 1419 / IAM 19013 / LMG 5710 / NBRC 13948 / NRRL B-527 / VKM B-1787 / 2291 / W)).